Consider the following 443-residue polypeptide: Phosphoglucosamine mutase (443 aa).

Ser100 (phosphoserine intermediate) is an active-site residue. Residues Ser100, Asp239, Asp241, and Asp243 each contribute to the Mg(2+) site. Residue Ser100 is modified to Phosphoserine.

This sequence belongs to the phosphohexose mutase family. Requires Mg(2+) as cofactor. Activated by phosphorylation.

The catalysed reaction is alpha-D-glucosamine 1-phosphate = D-glucosamine 6-phosphate. In terms of biological role, catalyzes the conversion of glucosamine-6-phosphate to glucosamine-1-phosphate. This is Phosphoglucosamine mutase from Shewanella loihica (strain ATCC BAA-1088 / PV-4).